The following is a 38-amino-acid chain: uncharacterized protein (38 aa).

This is an uncharacterized protein from Haemophilus influenzae (strain ATCC 51907 / DSM 11121 / KW20 / Rd).